We begin with the raw amino-acid sequence, 231 residues long: 7-cyano-7-deazaguanine synthase (231 aa).

8–18 serves as a coordination point for ATP; the sequence is FSGGQDSTTCL. Positions 188, 197, 200, and 203 each coordinate Zn(2+).

It belongs to the QueC family. Zn(2+) serves as cofactor.

It catalyses the reaction 7-carboxy-7-deazaguanine + NH4(+) + ATP = 7-cyano-7-deazaguanine + ADP + phosphate + H2O + H(+). The protein operates within purine metabolism; 7-cyano-7-deazaguanine biosynthesis. In terms of biological role, catalyzes the ATP-dependent conversion of 7-carboxy-7-deazaguanine (CDG) to 7-cyano-7-deazaguanine (preQ(0)). This chain is 7-cyano-7-deazaguanine synthase, found in Salmonella agona (strain SL483).